We begin with the raw amino-acid sequence, 286 residues long: Shikimate dehydrogenase (NADP(+)) (286 aa).

Residues 20–22 (SLS) and serine 67 each bind shikimate. Lysine 71 (proton acceptor) is an active-site residue. Positions 92 and 107 each coordinate shikimate. NADP(+) is bound by residues 131–135 (GGGGA) and alanine 230. Residue tyrosine 232 participates in shikimate binding. Glycine 253 lines the NADP(+) pocket.

This sequence belongs to the shikimate dehydrogenase family. As to quaternary structure, homodimer.

It carries out the reaction shikimate + NADP(+) = 3-dehydroshikimate + NADPH + H(+). It functions in the pathway metabolic intermediate biosynthesis; chorismate biosynthesis; chorismate from D-erythrose 4-phosphate and phosphoenolpyruvate: step 4/7. Functionally, involved in the biosynthesis of the chorismate, which leads to the biosynthesis of aromatic amino acids. Catalyzes the reversible NADPH linked reduction of 3-dehydroshikimate (DHSA) to yield shikimate (SA). This is Shikimate dehydrogenase (NADP(+)) from Lactococcus lactis subsp. cremoris (strain MG1363).